The following is a 426-amino-acid chain: 10-deoxymethynolide desosaminyltransferase (426 aa).

It belongs to the glycosyltransferase 28 family. As to quaternary structure, forms a complex with DesVIII.

The catalysed reaction is 10-deoxymethynolide + dTDP-alpha-D-desosamine = 10-deoxymethymycin + dTDP + H(+). It functions in the pathway antibiotic biosynthesis. In terms of biological role, involved in the biosynthesis of the macrolide antibiotics methymycin, neomethymycin, narbomycin, and pikromycin. Catalyzes the attachment of dTDP-D-desosamine onto 12- and 14-membered macrolactone rings 10-deoxymethynolide and narbonolide to produce 10-deoxymethymycin (YC-17) and narbomycin. DesVII is unique among glycosyltransferases in that it requires an additional protein component, DesVIII, for its activity. DesVII can recognize and process not only cyclic substrates of different ring size, but also a variety of linear substrates albeit with reduced, but measurable activities. Both L-sugars and D-sugars are recognized as substrates and variant substitutions at C-3 and C-4 are tolerated, but deoxygenation at C-6 is required. The protein is 10-deoxymethynolide desosaminyltransferase of Streptomyces venezuelae.